The chain runs to 232 residues: Large ribosomal subunit protein uL1 (232 aa).

Belongs to the universal ribosomal protein uL1 family. In terms of assembly, part of the 50S ribosomal subunit.

In terms of biological role, binds directly to 23S rRNA. The L1 stalk is quite mobile in the ribosome, and is involved in E site tRNA release. Protein L1 is also a translational repressor protein, it controls the translation of the L11 operon by binding to its mRNA. The polypeptide is Large ribosomal subunit protein uL1 (Bordetella petrii (strain ATCC BAA-461 / DSM 12804 / CCUG 43448)).